A 251-amino-acid polypeptide reads, in one-letter code: Triosephosphate isomerase (251 aa).

Position 9-11 (9-11 (NWK)) interacts with substrate. Residue His94 is the Electrophile of the active site. The active-site Proton acceptor is the Glu167. Substrate is bound by residues Gly173, Ser213, and 234–235 (GG).

The protein belongs to the triosephosphate isomerase family. In terms of assembly, homodimer.

The protein resides in the cytoplasm. It catalyses the reaction D-glyceraldehyde 3-phosphate = dihydroxyacetone phosphate. Its pathway is carbohydrate biosynthesis; gluconeogenesis. The protein operates within carbohydrate degradation; glycolysis; D-glyceraldehyde 3-phosphate from glycerone phosphate: step 1/1. Functionally, involved in the gluconeogenesis. Catalyzes stereospecifically the conversion of dihydroxyacetone phosphate (DHAP) to D-glyceraldehyde-3-phosphate (G3P). This chain is Triosephosphate isomerase, found in Finegoldia magna (strain ATCC 29328 / DSM 20472 / WAL 2508) (Peptostreptococcus magnus).